We begin with the raw amino-acid sequence, 89 residues long: MAHKKAGGSSRNGRDSAGQRRGVKRFGGERVLAGNILVRQLGTRVHPGDNVGMGRDYTLFATVEGTVKYEKYTRKKKVQTRVHVVPAQA.

A disordered region spans residues 1–26 (MAHKKAGGSSRNGRDSAGQRRGVKRF).

It belongs to the bacterial ribosomal protein bL27 family.

The chain is Large ribosomal subunit protein bL27 from Nitratidesulfovibrio vulgaris (strain DSM 19637 / Miyazaki F) (Desulfovibrio vulgaris).